Consider the following 81-residue polypeptide: Beta-catenin-interacting protein 1 (81 aa).

The residue at position 59 (Ser-59) is a Phosphoserine.

The protein belongs to the CTNNBIP1 family. Binds CTNNB1.

It localises to the cytoplasm. It is found in the nucleus. Functionally, prevents the interaction between CTNNB1 and TCF family members, and acts as a negative regulator of the Wnt signaling pathway. In Homo sapiens (Human), this protein is Beta-catenin-interacting protein 1 (CTNNBIP1).